Here is a 648-residue protein sequence, read N- to C-terminus: Calpain-5 (648 aa).

Residues 28–353 (PFVDTLFPPT…FTDISLCQLF (326 aa)) enclose the Calpain catalytic domain. Active-site residues include cysteine 83, histidine 252, and asparagine 290. Positions 354 to 509 (NTSVFSFSRS…VYSDEHIHFS (156 aa)) are domain III. Residues 502–625 (SDEHIHFSPL…ENRDTTLQLT (124 aa)) enclose the C2 domain.

This sequence belongs to the peptidase C2 family. Ca(2+) serves as cofactor. Expressed in neuronal, but not in GABA-ergic neurons, intestinal, hypodermal and excretory tissues.

In terms of biological role, required for the correct female sexual development of the soma and germline in hermaphrodite animals, while being fully dispensable in males. Has calcium-dependent proteolytic activity and is involved in the cleavage of tra-2, for which it acts as a potentiator. Capable of calcium-dependent autolysis. Part of the necrosis cell death pathway. Required for necrosis of intestinal cells induced by B.thuringiensis endotoxin Cry6Aa. This is Calpain-5 from Caenorhabditis elegans.